Consider the following 464-residue polypeptide: Gasdermin-A3 (464 aa).

The interval 1-261 (MPVFEDVTRA…EEPEEEKLIG (261 aa)) is triggers pyroptosis. 9-13 (RALVR) provides a ligand contact to a cardiolipin. Beta stranded transmembrane passes span 78–95 (NFSF…LVEV), 99–120 (VKVK…TLSV), 164–180 (VTVE…SLPS), and 184–198 (LGLQ…AVTI). A coiled-coil region spans residues 255 to 327 (EEEKLIGEMH…DKGQKVTLEA (73 aa)).

It belongs to the gasdermin family. Homooligomer; homooligomeric ring-shaped pore complex containing 18-36 subunits when inserted in the membrane. Cleavage relieves autoinhibition by releasing the N-terminal moiety (Gasdermin-A3, N-terminal) that initiates pyroptosis. In contrast to Gsdma, not cleaved by bacterial effector protein SpeB. Post-translationally, palmitoylated. As to expression, highest levels in skin with weak expression in placenta and testis. Not detected in the gastrointestinal tract. In skin, expressed in postnatal hair follicles and epidermis as well as sebaceous gland basal cells.

The protein localises to the cytoplasm. The protein resides in the cytosol. Its subcellular location is the cell membrane. It is found in the mitochondrion membrane. Its activity is regulated as follows. The full-length protein before cleavage is inactive: intramolecular interactions between N- and C-terminal domains mediate autoinhibition in the absence of activation signal. The intrinsic pyroptosis-inducing activity is carried by the released N-terminal moiety (Gasdermin-A3, N-terminal). Its function is as follows. Precursor of a pore-forming protein involved in the transition from catagen to telogen at the end of hair follicle morphogenesis. This form constitutes the precursor of the pore: upon cleavage, the released N-terminal moiety (Gasdermin-A3, N-terminal) binds to membranes and forms pores, triggering pyroptosis. This form acts as a sensor of infection: activation is triggered by cleavage by some bacterial effector protein, which releases the N-terminal moiety (Gasdermin-A3, N-terminal). In terms of biological role, pore-forming protein that causes membrane permeabilization and pyroptosis. Released upon cleavage by some bacterial effector protein, and binds to membrane inner leaflet lipids. Homooligomerizes within the membrane and forms pores of 10-15 nanometers (nm) of inner diameter, allowing the release of mature interleukin-1 (IL1B and IL18) and triggering pyroptosis. Binds to membrane inner leaflet lipids, including bisphosphorylated phosphatidylinositols, such as phosphatidylinositol (4,5)-bisphosphate, as well as phosphatidylinositol (3,4,5)-bisphosphate, and more weakly to monophosphorylated phosphatidylinositols. Also binds to bacterial and mitochondrial lipids, including cardiolipin, and exhibits bactericidal activity. Plays a role in the transition from catagen to telogen at the end of hair follicle morphogenesis, possibly by regulating hair follicle stem cell niche maintenance. Also required for mammary gland development. The sequence is that of Gasdermin-A3 from Mus musculus (Mouse).